Here is a 408-residue protein sequence, read N- to C-terminus: Acetate kinase (408 aa).

Asn10 lines the Mg(2+) pocket. Lys17 provides a ligand contact to ATP. Position 96 (Arg96) interacts with substrate. Asp153 acts as the Proton donor/acceptor in catalysis. ATP-binding positions include 213-217 (HLGNG) and 288-290 (DLR). Glu393 lines the Mg(2+) pocket.

This sequence belongs to the acetokinase family. Homodimer. Requires Mg(2+) as cofactor. Mn(2+) serves as cofactor.

The protein resides in the cytoplasm. It catalyses the reaction acetate + ATP = acetyl phosphate + ADP. It participates in metabolic intermediate biosynthesis; acetyl-CoA biosynthesis; acetyl-CoA from acetate: step 1/2. Catalyzes the formation of acetyl phosphate from acetate and ATP. Can also catalyze the reverse reaction. The sequence is that of Acetate kinase from Borrelia recurrentis (strain A1).